A 139-amino-acid polypeptide reads, in one-letter code: Putative nickel-responsive regulator (139 aa).

Ni(2+) contacts are provided by histidine 79, histidine 90, histidine 92, and cysteine 98.

It belongs to the transcriptional regulatory CopG/NikR family. It depends on Ni(2+) as a cofactor.

In terms of biological role, transcriptional regulator. In Nitratidesulfovibrio vulgaris (strain ATCC 29579 / DSM 644 / CCUG 34227 / NCIMB 8303 / VKM B-1760 / Hildenborough) (Desulfovibrio vulgaris), this protein is Putative nickel-responsive regulator.